A 261-amino-acid polypeptide reads, in one-letter code: Orotidine 5'-phosphate decarboxylase (261 aa).

Substrate is bound by residues Asp-34, 56–58 (KTH), 88–97 (DRKFADIGNT), Tyr-214, and Arg-232. Residue Lys-90 is the Proton donor of the active site.

This sequence belongs to the OMP decarboxylase family.

The catalysed reaction is orotidine 5'-phosphate + H(+) = UMP + CO2. The protein operates within pyrimidine metabolism; UMP biosynthesis via de novo pathway; UMP from orotate: step 2/2. The protein is Orotidine 5'-phosphate decarboxylase (URA3) of Kodamaea ohmeri (Yeast).